Here is a 627-residue protein sequence, read N- to C-terminus: Protein CER1-like 1 (627 aa).

A run of 5 helical transmembrane segments spans residues 19–39 (FKYLLVAPLVMASMHSYVTAV), 48–68 (LMIVVLMLWRIVHSQIWISVS), 126–146 (GAILMALLHAGPVEFLYYWFH), 186–206 (LLFAIPMVTASLCGILSIVSI), and 328–348 (YLTCFMWPFTLLCSFALTSAI). The Fatty acid hydroxylase domain maps to 138–272 (VEFLYYWFHR…MPIYDFIYGT (135 aa)).

It belongs to the sterol desaturase family. Expressed in flowers and siliques. Not detected in pollen, pedicels and seeds.

The protein localises to the membrane. This Arabidopsis thaliana (Mouse-ear cress) protein is Protein CER1-like 1.